Here is a 363-residue protein sequence, read N- to C-terminus: Protein Wnt-5b (363 aa).

The first 21 residues, 1 to 21 (MDVRMNQGHLLLAVTLIVCNS), serve as a signal peptide directing secretion. Cys87 and Cys98 are oxidised to a cystine. N-linked (GlcNAc...) asparagine glycans are attached at residues Asn97 and Asn103. Intrachain disulfides connect Cys137/Cys145, Cys147/Cys165, Cys221/Cys235, Cys223/Cys230, Cys292/Cys323, Cys308/Cys318, Cys322/Cys362, Cys338/Cys353, Cys340/Cys350, and Cys345/Cys346. Ser227 carries the O-palmitoleoyl serine; by PORCN lipid modification. N-linked (GlcNAc...) asparagine glycans are attached at residues Asn295 and Asn309.

The protein belongs to the Wnt family. In terms of processing, palmitoleoylation is required for efficient binding to frizzled receptors. Depalmitoleoylation leads to Wnt signaling pathway inhibition.

Its subcellular location is the secreted. The protein resides in the extracellular space. It is found in the extracellular matrix. Its function is as follows. Ligand for members of the frizzled family of seven transmembrane receptors. Can activate or inhibit canonical Wnt signaling, depending on receptor context. Required during embryogenesis for extension of the primary anterior-posterior axis. Regulates convergent extension movements and hypaxial myogenesis during gastrulation via activation of non-canonical Wnt signaling. This Danio rerio (Zebrafish) protein is Protein Wnt-5b (wnt5b).